A 303-amino-acid chain; its full sequence is Glutamyl-Q tRNA(Asp) synthetase (303 aa).

Residues 9–13 and glutamate 45 contribute to the L-glutamate site; that span reads RFAPS. The short motif at 12-22 is the 'HIGH' region element; sequence PSPSGSLHFGS. Zn(2+)-binding residues include cysteine 101, cysteine 103, tyrosine 115, and cysteine 119. Positions 172 and 190 each coordinate L-glutamate. Positions 228–232 match the 'KMSKS' region motif; the sequence is KLSKQ. Lysine 231 contacts ATP.

Belongs to the class-I aminoacyl-tRNA synthetase family. GluQ subfamily. Requires Zn(2+) as cofactor.

Functionally, catalyzes the tRNA-independent activation of glutamate in presence of ATP and the subsequent transfer of glutamate onto a tRNA(Asp). Glutamate is transferred on the 2-amino-5-(4,5-dihydroxy-2-cyclopenten-1-yl) moiety of the queuosine in the wobble position of the QUC anticodon. The chain is Glutamyl-Q tRNA(Asp) synthetase from Serratia proteamaculans (strain 568).